The chain runs to 61 residues: MAKKSMIAKNKRPAKHSTQAYTRCERCGRPHSVYRKFHLCRICFRELAYKGQIPGVKKASW.

Zn(2+) contacts are provided by C24, C27, C40, and C43.

Belongs to the universal ribosomal protein uS14 family. Zinc-binding uS14 subfamily. As to quaternary structure, part of the 30S ribosomal subunit. Contacts proteins S3 and S10. Zn(2+) is required as a cofactor.

Functionally, binds 16S rRNA, required for the assembly of 30S particles and may also be responsible for determining the conformation of the 16S rRNA at the A site. This Enterococcus faecalis (strain ATCC 700802 / V583) protein is Small ribosomal subunit protein uS14C.